Consider the following 463-residue polypeptide: MTNYRTESDSFGEIQIEDKFYWGAQTQRSLENFKIGKQRMPEILIRSLAILKKCAAKVNLEFGDLEPKIAESIDKATSRILNAEFSDNFPLVVWQTGSGTQTNMNMNEVIASIANEELTGMKGGKSPVHPNDHVNKGQSSNDSFPTAMHIATVLATREKLIPALNNLLTALQNKSKDWDSIIKIGRTHLQDATPLTLKQEFSGYITQIEYALERIEDALKKVYLLAQGGTAVGTGINSRKGFDIKFAEEVAEFTKQPFKTAPNKFESLAAHDALVEFSGTLNTIAVSLMKIANDIRLLGSGPRCGLGELHLPENEPGSSIMPGKVNPTQVEALTMVCTQVMGNHVTVTIAGSNGHLELNVFKPVIIYNILQSIELLSDAANSFVTHCVDGIEPNITHINDLRDKSLMLVTALNPHIGYDNAAKIAKEAHKHGITLKEAAKKLNLLSEEEFNKIVVPEKMVRQS.

Residues 98–100 (SGT), 129–132 (HPND), 139–141 (SSN), and Thr187 each bind substrate. His188 functions as the Proton donor/acceptor in the catalytic mechanism. The active site involves Ser318. Residues Ser319 and 324–326 (KVN) contribute to the substrate site.

Belongs to the class-II fumarase/aspartase family. Fumarase subfamily. In terms of assembly, homotetramer.

The protein resides in the cytoplasm. It carries out the reaction (S)-malate = fumarate + H2O. The protein operates within carbohydrate metabolism; tricarboxylic acid cycle; (S)-malate from fumarate: step 1/1. Its function is as follows. Involved in the TCA cycle. Catalyzes the stereospecific interconversion of fumarate to L-malate. The sequence is that of Fumarate hydratase class II from Rickettsia bellii (strain RML369-C).